The chain runs to 597 residues: Probable bifunctional ADP-ribose hydrolase/ADP-ribosyltransferase (597 aa).

The 201-residue stretch at 99 to 299 folds into the Macro domain; it reads SRLIKHGDLG…FYSKLLGPSH (201 aa). D118, I119, and N133 together coordinate ADP-D-ribose. The Zn(2+) site is built by C139, H144, and C146. Residues C146, I147, D148, S244, T245, G246, and F248 each coordinate ADP-D-ribose. One can recognise a Deacetylase sirtuin-type domain in the interval 307–597; sequence ENTPQGSLSL…IGRAIPLLLE (291 aa). NAD(+) contacts are provided by residues A333, 418-421, and Q438; that span reads SNAD. Residues C446, C450, C485, and C488 each contribute to the Zn(2+) site. V584 lines the NAD(+) pocket.

The protein in the N-terminal section; belongs to the MacroD-type family. Zn-Macro subfamily. In the C-terminal section; belongs to the sirtuin family. Class M subfamily. As to quaternary structure, monomer. The cofactor is Zn(2+).

The catalysed reaction is 5-O-(ADP-D-ribosyl)-L-glutamyl-[protein] + H2O = L-glutamyl-[protein] + ADP-D-ribose + H(+). Is probably a bifunctional enzyme with ADP-ribosyltransferase and ADP-ribosylhydrolase activities. In vitro, can act as an ADP-ribosylhydrolase that hydrolyzes ADP-ribosyl-glutamate bonds. It can remove the ADP-ribosyl modification from the human mono-ADP-ribosylated PARP1 E988Q mutant, which is primarily modified on glutamate site with only minor aspartate contribution. It cannot hydrolyze the ADP-ribosyl-arpartate bond in ribosylated S.pyogenes GcvH-L. The sequence is that of Probable bifunctional ADP-ribose hydrolase/ADP-ribosyltransferase from Fusarium oxysporum f. sp. cubense.